The chain runs to 607 residues: MSVSFDSSAFLATCSGRPGVYRMFDADARLLYVGKAKNLKKRLSSYFRKTGQAPKTAALVARIAQVETTITANETEALLLEQTLIKEWRPPYNILLRDDKSYPYVFLSDGEFPRLGIHRGAKKAKGRYFGPYPSALAIRESLSLLQKTFLVRQCEDSYYRNRTRPCLQYQIKRCKGPCVGLVSPEEYAEDVRHSVMFLEGRSNALSEELSASMEKASMALEFERAAELRDQISMLRRVQDQQSMEGGSGDVDVVAVMLNPGGACVHLISVRGGRVLGSKNFFPQVAIEEEGGEVLMAFLAQYYLGNAERDLPSELIVNVQHEDFSTLIEAVESLRGRSLSISLRVRGTRARWQQLAVTNAEQALAARLANRQHLAERFEALATVLEMDEPPQRMECFDISHSSGEATVASCVVFGPEGPLKSDYRRFNIEGVTPGDDYAAMHQALTRRFSKIKDGEGKLPDVLLVDGGKGQLAMAREVLQELAVPDLILLGVAKGTTRKPGLEVLYLNDAEHEFTLPGNSPALHLIQQIRDESHRFAITGHRARRGKARRTSTLEEVAGIGPKRRRELLNHFGGLQELSRASAEEIAKAPGISKKLAELIYATLHSE.

A GIY-YIG domain is found at 16–94 (GRPGVYRMFD…IKEWRPPYNI (79 aa)). One can recognise a UVR domain in the interval 203–238 (NALSEELSASMEKASMALEFERAAELRDQISMLRRV).

The protein belongs to the UvrC family. In terms of assembly, interacts with UvrB in an incision complex.

It is found in the cytoplasm. In terms of biological role, the UvrABC repair system catalyzes the recognition and processing of DNA lesions. UvrC both incises the 5' and 3' sides of the lesion. The N-terminal half is responsible for the 3' incision and the C-terminal half is responsible for the 5' incision. This is UvrABC system protein C from Ectopseudomonas mendocina (strain ymp) (Pseudomonas mendocina).